We begin with the raw amino-acid sequence, 432 residues long: D-amino acid dehydrogenase (432 aa).

Residue 3-17 (VVILGSGVVGVTSAW) participates in FAD binding.

It belongs to the DadA oxidoreductase family. Requires FAD as cofactor.

It localises to the cell inner membrane. It carries out the reaction a D-alpha-amino acid + A + H2O = a 2-oxocarboxylate + AH2 + NH4(+). It functions in the pathway amino-acid degradation; D-alanine degradation; NH(3) and pyruvate from D-alanine: step 1/1. In terms of biological role, oxidative deamination of D-amino acids. This Salmonella typhi protein is D-amino acid dehydrogenase.